The sequence spans 1222 residues: ATP-dependent helicase/nuclease subunit A (1222 aa).

A UvrD-like helicase ATP-binding domain is found at 39 to 495 (QKRTAQQIEA…ILLKENFRSQ (457 aa)). Position 60-67 (60-67 (ASAGSGKT)) interacts with ATP. One can recognise a UvrD-like helicase C-terminal domain in the interval 524–810 (QLIAGSHAQT…NLMTIHKSKG (287 aa)).

The protein belongs to the helicase family. AddA subfamily. Heterodimer of AddA and AddB/RexB. The cofactor is Mg(2+).

It carries out the reaction Couples ATP hydrolysis with the unwinding of duplex DNA by translocating in the 3'-5' direction.. The catalysed reaction is ATP + H2O = ADP + phosphate + H(+). Functionally, the heterodimer acts as both an ATP-dependent DNA helicase and an ATP-dependent, dual-direction single-stranded exonuclease. Recognizes the chi site generating a DNA molecule suitable for the initiation of homologous recombination. The AddA nuclease domain is required for chi fragment generation; this subunit has the helicase and 3' -&gt; 5' nuclease activities. This is ATP-dependent helicase/nuclease subunit A from Streptococcus pyogenes serotype M3 (strain ATCC BAA-595 / MGAS315).